The following is a 258-amino-acid chain: 5'-nucleotidase SurE (258 aa).

Residues Asp9, Asp10, Ser42, and Asn95 each contribute to the a divalent metal cation site.

This sequence belongs to the SurE nucleotidase family. A divalent metal cation serves as cofactor.

Its subcellular location is the cytoplasm. It catalyses the reaction a ribonucleoside 5'-phosphate + H2O = a ribonucleoside + phosphate. Nucleotidase that shows phosphatase activity on nucleoside 5'-monophosphates. This Campylobacter concisus (strain 13826) protein is 5'-nucleotidase SurE.